The chain runs to 186 residues: Agglutinin isolectin 3 (186 aa).

Pyrrolidone carboxylic acid is present on glutamine 1. Chitin-binding type-1 domains are found at residues 1-42 (QRCG…ACWT), 43-85 (SKRC…PCRA), 86-128 (DIKC…ACST), and 129-171 (DKPC…GCDG). Intrachain disulfides connect cysteine 3–cysteine 18, cysteine 12–cysteine 24, cysteine 17–cysteine 31, cysteine 35–cysteine 40, cysteine 46–cysteine 61, cysteine 55–cysteine 67, cysteine 60–cysteine 74, cysteine 78–cysteine 83, cysteine 89–cysteine 104, cysteine 98–cysteine 110, cysteine 103–cysteine 117, cysteine 121–cysteine 126, cysteine 132–cysteine 147, cysteine 141–cysteine 153, cysteine 146–cysteine 160, and cysteine 164–cysteine 169. Position 10–12 (10–12 (MEC)) interacts with substrate. 62-73 (SQYGHCGFGAEY) contacts substrate. 114-115 (SE) contributes to the substrate binding site. A propeptide spanning residues 172-186 (VFAEAIATNSTLLAE) is cleaved from the precursor. N-linked (GlcNAc...) asparagine glycosylation is present at asparagine 180.

Homodimer, u-shaped.

Functionally, N-acetyl-D-glucosamine / N-acetyl-D-neuraminic acid binding lectin. The polypeptide is Agglutinin isolectin 3 (Triticum aestivum (Wheat)).